The following is a 357-amino-acid chain: Alanine racemase (357 aa).

Lys-33 functions as the Proton acceptor; specific for D-alanine in the catalytic mechanism. Position 33 is an N6-(pyridoxal phosphate)lysine (Lys-33). Arg-129 serves as a coordination point for substrate. The Proton acceptor; specific for L-alanine role is filled by Tyr-253. Met-301 lines the substrate pocket.

The protein belongs to the alanine racemase family. Pyridoxal 5'-phosphate serves as cofactor.

The catalysed reaction is L-alanine = D-alanine. It functions in the pathway amino-acid biosynthesis; D-alanine biosynthesis; D-alanine from L-alanine: step 1/1. Catalyzes the interconversion of L-alanine and D-alanine. May also act on other amino acids. In Pseudomonas syringae pv. syringae (strain B728a), this protein is Alanine racemase (alr).